The sequence spans 89 residues: Small ribosomal subunit protein uS15 (89 aa).

Residues 1–21 (MALTTEEKKQVLSEYGLHETD) are compositionally biased toward basic and acidic residues. Positions 1–24 (MALTTEEKKQVLSEYGLHETDTGS) are disordered.

Belongs to the universal ribosomal protein uS15 family. Part of the 30S ribosomal subunit. Forms a bridge to the 50S subunit in the 70S ribosome, contacting the 23S rRNA.

One of the primary rRNA binding proteins, it binds directly to 16S rRNA where it helps nucleate assembly of the platform of the 30S subunit by binding and bridging several RNA helices of the 16S rRNA. Its function is as follows. Forms an intersubunit bridge (bridge B4) with the 23S rRNA of the 50S subunit in the ribosome. This chain is Small ribosomal subunit protein uS15, found in Rhodococcus jostii (strain RHA1).